We begin with the raw amino-acid sequence, 654 residues long: Endoplasmic reticulum chaperone BiP (654 aa).

Positions 1–18 are cleaved as a signal peptide; that stretch reads MKFPMVAAALLLLCAVRA. Residues 1–80 form a required for interaction with ELAPOR1 region; that stretch reads MKFPMVAAAL…EGERLIGDAA (80 aa). Residue 36 to 39 participates in ATP binding; that stretch reads GTTY. Serine 86 carries the phosphoserine modification. Lysine 96 provides a ligand contact to ATP. Lysine 125 carries the N6-acetyllysine modification. The interval 125–280 is nucleotide-binding (NBD); sequence KPYIQVDIGG…KKKTGKDVRK (156 aa). At tyrosine 160 the chain carries 3'-nitrotyrosine. Lysine 213 carries the N6-acetyllysine modification. 227-229 contributes to the ATP binding site; sequence GGT. Lysine 271 carries the N6-acetyllysine modification. 293–300 lines the ATP pocket; it reads EKAKRALS. The residue at position 326 (lysine 326) is an N6-acetyllysine. A Glycyl lysine isopeptide (Lys-Gly) (interchain with G-Cter in SUMO2) cross-link involves residue lysine 352. Residue lysine 353 is modified to N6-acetyllysine; alternate. Lysine 353 is covalently cross-linked (Glycyl lysine isopeptide (Lys-Gly) (interchain with G-Cter in SUMO1); alternate). Residue 364–367 participates in ATP binding; that stretch reads GSTR. The interval 409-419 is interdomain linker; sequence QDTGDLVLLDV. Residues 420 to 500 form a substrate-binding (SBD) region; sequence CPLTLGIETV…PRGVPQIEVT (81 aa). Position 447 is an N6-succinyllysine (lysine 447). At arginine 492 the chain carries Omega-N-methylarginine. Position 518 is an O-AMP-threonine; alternate (threonine 518). Threonine 518 carries the post-translational modification Phosphothreonine; alternate. Lysine 585 is modified (N6,N6,N6-trimethyllysine; by METTL21A; in vitro). Position 585 is an N6,N6-dimethyllysine; alternate (lysine 585). N6-methyllysine; alternate is present on lysine 585. Lysine 591 carries the N6-methyllysine modification. Positions 632–654 are disordered; it reads SKLYGSAGPPPTGEEDTSEKDEL. Threonine 643 and threonine 648 each carry phosphothreonine. Over residues 644-654 the composition is skewed to acidic residues; sequence GEEDTSEKDEL. Serine 649 carries the post-translational modification Phosphoserine. Positions 651–654 match the Prevents secretion from ER motif; the sequence is KDEL.

This sequence belongs to the heat shock protein 70 family. Monomer and homooligomer; homooligomerization via the interdomain linker inactivates the chaperone activity and acts as a storage of HSPA5/BiP molecules. Interacts with DNAJC1 (via J domain). Component of an EIF2 complex at least composed of CELF1/CUGBP1, CALR, CALR3, EIF2S1, EIF2S2, HSP90B1 and HSPA5. Part of a large chaperone multiprotein complex comprising DNAJB11, HSP90B1, HSPA5, HYOU, PDIA2, PDIA4, PDIA6, PPIB, SDF2L1, UGGT1 and very small amounts of ERP29, but not, or at very low levels, CALR nor CANX. Interacts with TMEM132A and TRIM21. May form a complex with ERLEC1, OS9, SEL1L and SYVN1. Interacts with DNAJC10. Interacts with DNAJB9/ERdj4; leading to recruit HSPA5/BiP to ERN1/IRE1. Interacts with ERN1/IRE1 (via luminal domain); the interaction takes place following interaction with DNAJB9/ERdj4 and leads to inactivate ERN1/IRE1, the interaction also competitively inhibits ERN1 interaction with MANF. Interacts directly with MANF (via SAP domain); the interaction inhibits ATP binding to HSPA5/BiP and subsequent nucleotide exchange. Interacts with EIF2AK3/PERK (via luminal domain); interaction leads to inactivate EIF2AK3/PERK. Interacts with MX1. Interacts with METTL23. Interacts with CEMIP; the interaction induces calcium leakage from the endoplasmic reticulum and cell migration. Interacts with PCSK4 form; the interaction takes place in the endoplasmic reticulum. Interacts with CIPC. Interacts with CCDC88B (via C-terminus); the interaction opposes ERN1-mediated JNK activation, protecting against apoptosis. Interacts with INPP5K; necessary for INPP5K localization at the endoplasmic reticulum. Interacts with LOXL2; leading to activate the ERN1/IRE1-XBP1 pathway of the unfolded protein response. Interacts with CLU under stressed condition; interaction increases CLU protein stability; facilitates its retrotranslocation and redistribution to the mitochondria; cooperatively suppress stress-induced apoptosis by stabilizing mitochondrial membrane integrity. Interacts with CCDC47. Interacts with CLN3. Interacts with ELAPOR1; may regulate the function of HSPA5 in apoptosis and cell proliferation. Interacts with CASP7. Interacts with ILDR2; the interaction stabilizes ILDR2 expression. Interacts with ADAM7. In terms of processing, in unstressed cells, AMPylation at Thr-518 by FICD inactivates the chaperome activity: AMPylated form is locked in a relatively inert state and only weakly stimulated by J domain-containing proteins. In response to endoplasmic reticulum stress, de-AMPylation by the same protein, FICD, restores the chaperone activity.

The protein resides in the endoplasmic reticulum lumen. Its subcellular location is the melanosome. The protein localises to the cytoplasm. It localises to the cell surface. It catalyses the reaction ATP + H2O = ADP + phosphate + H(+). The chaperone activity is regulated by ATP-induced allosteric coupling of the nucleotide-binding (NBD) and substrate-binding (SBD) domains. In the ADP-bound and nucleotide-free (apo) states, the two domains have little interaction. In contrast, in the ATP-bound state the two domains are tightly coupled, which results in drastically accelerated kinetics in both binding and release of polypeptide substrates. J domain-containing co-chaperones (DNAJB9/ERdj4 or DNAJC10/ERdj5) stimulate the ATPase activity and are required for efficient substrate recognition by HSPA5/BiP. Homooligomerization inactivates participating HSPA5/BiP protomers and probably act as reservoirs to store HSPA5/BiP molecules when they are not needed by the cell. Endoplasmic reticulum chaperone that plays a key role in protein folding and quality control in the endoplasmic reticulum lumen. Involved in the correct folding of proteins and degradation of misfolded proteins via its interaction with DNAJC10/ERdj5, probably to facilitate the release of DNAJC10/ERdj5 from its substrate. Acts as a key repressor of the EIF2AK3/PERK and ERN1/IRE1-mediated unfolded protein response (UPR). In the unstressed endoplasmic reticulum, recruited by DNAJB9/ERdj4 to the luminal region of ERN1/IRE1, leading to disrupt the dimerization of ERN1/IRE1, thereby inactivating ERN1/IRE1. Also binds and inactivates EIF2AK3/PERK in unstressed cells. Accumulation of misfolded protein in the endoplasmic reticulum causes release of HSPA5/BiP from ERN1/IRE1 and EIF2AK3/PERK, allowing their homodimerization and subsequent activation. Plays an auxiliary role in post-translational transport of small presecretory proteins across endoplasmic reticulum (ER). May function as an allosteric modulator for SEC61 channel-forming translocon complex, likely cooperating with SEC62 to enable the productive insertion of these precursors into SEC61 channel. Appears to specifically regulate translocation of precursors having inhibitory residues in their mature region that weaken channel gating. May also play a role in apoptosis and cell proliferation. The sequence is that of Endoplasmic reticulum chaperone BiP from Cricetulus griseus (Chinese hamster).